The primary structure comprises 120 residues: MESQAKVKISDKAEGIIERDMQNSVIGRREISLKVYHMGSGTPSRKDIIKAIIQALGSQENLVVVRKISTSYGAGISNVKLHIYKSREILEKVEPKYLLDRDAGTKQKKGGSKGGQGAKG.

The disordered stretch occupies residues 101-120 (RDAGTKQKKGGSKGGQGAKG).

Belongs to the eukaryotic ribosomal protein eS24 family.

The polypeptide is Small ribosomal subunit protein eS24 (Saccharolobus solfataricus (strain ATCC 35092 / DSM 1617 / JCM 11322 / P2) (Sulfolobus solfataricus)).